Reading from the N-terminus, the 344-residue chain is Dihydroorotase (344 aa).

Residues histidine 13 and histidine 15 each contribute to the Zn(2+) site. Substrate-binding positions include 15–17 (HLR) and asparagine 41. The Zn(2+) site is built by lysine 99, histidine 136, and histidine 174. The residue at position 99 (lysine 99) is an N6-carboxylysine. Histidine 136 is a binding site for substrate. Leucine 219 is a binding site for substrate. Aspartate 247 is a Zn(2+) binding site. Aspartate 247 is an active-site residue. The substrate site is built by histidine 251 and alanine 263.

This sequence belongs to the metallo-dependent hydrolases superfamily. DHOase family. Class II DHOase subfamily. Homodimer. The cofactor is Zn(2+).

It carries out the reaction (S)-dihydroorotate + H2O = N-carbamoyl-L-aspartate + H(+). Its pathway is pyrimidine metabolism; UMP biosynthesis via de novo pathway; (S)-dihydroorotate from bicarbonate: step 3/3. Functionally, catalyzes the reversible cyclization of carbamoyl aspartate to dihydroorotate. The protein is Dihydroorotase of Shewanella denitrificans (strain OS217 / ATCC BAA-1090 / DSM 15013).